The chain runs to 230 residues: Ion-translocating oxidoreductase complex subunit E (230 aa).

5 helical membrane-spanning segments follow: residues L39 to I59, I69 to A89, G93 to G113, L125 to L145, and S182 to L202.

It belongs to the NqrDE/RnfAE family. In terms of assembly, the complex is composed of six subunits: RnfA, RnfB, RnfC, RnfD, RnfE and RnfG.

The protein resides in the cell inner membrane. Part of a membrane-bound complex that couples electron transfer with translocation of ions across the membrane. The sequence is that of Ion-translocating oxidoreductase complex subunit E from Vibrio vulnificus (strain YJ016).